The primary structure comprises 66 residues: Large ribosomal subunit protein bL33c (66 aa).

This sequence belongs to the bacterial ribosomal protein bL33 family.

The protein localises to the plastid. Its subcellular location is the chloroplast. This chain is Large ribosomal subunit protein bL33c, found in Fagopyrum esculentum subsp. ancestrale (Wild buckwheat).